A 27-amino-acid polypeptide reads, in one-letter code: Conotoxin flf14a (27 aa).

2 cysteine pairs are disulfide-bonded: C6–C26 and C10–C22.

As to expression, expressed by the venom duct.

It localises to the secreted. The protein is Conotoxin flf14a of Conus anabathrum floridanus (Florida cone).